Reading from the N-terminus, the 39-residue chain is Omega-theraphotoxin-Ba1b (39 aa).

3 disulfides stabilise this stretch: C4–C17, C8–C31, and C25–C36.

The protein belongs to the neurotoxin 12 (Hwtx-2) family. 06 (TXP1) subfamily. As to expression, expressed by the venom gland.

The protein resides in the secreted. In terms of biological role, inhibits voltage-gated calcium channels (Cav) in rat cerebellar granule cells. Has insecticidal activity to crickets (Acheta domesticus). Is not toxic to mice. The protein is Omega-theraphotoxin-Ba1b of Brachypelma albiceps (Mexican golden redrump tarantula).